Consider the following 89-residue polypeptide: Small ribosomal subunit protein uS19 (89 aa).

It belongs to the universal ribosomal protein uS19 family.

Its function is as follows. Protein S19 forms a complex with S13 that binds strongly to the 16S ribosomal RNA. The sequence is that of Small ribosomal subunit protein uS19 from Ruthia magnifica subsp. Calyptogena magnifica.